The sequence spans 268 residues: Syntaxin-22 (268 aa).

Positions 1–23 are disordered; it reads MSFQDLESGRGRSTRKFNGGRQD. Serine 2 is modified (N-acetylserine). At 2 to 246 the chain is on the cytoplasmic side; sequence SFQDLESGRG…AAKTQKSNSS (245 aa). Residues 175–237 enclose the t-SNARE coiled-coil homology domain; it reads EAVIEEREQG…SQGKSQLVQA (63 aa). A helical; Anchor for type IV membrane protein transmembrane segment spans residues 247–267; sequence LTCLLLVIFGIVLLIVIIVLA. Residue alanine 268 is a topological domain, vesicular.

This sequence belongs to the syntaxin family. As to quaternary structure, interacts with VTI11 and SYP51 to form a t-SNARE complex, but not with VPS45. Expressed in roots, leaves, stems, flower and green siliques.

It localises to the prevacuolar compartment membrane. The protein localises to the vacuole membrane. In terms of biological role, may provide the t-SNARE function in the vacuolar assembly. Promotes the formation of vacuolar membrane 'bulbs'. Required for inflorescence stem gravitropism. This is Syntaxin-22 (SYP22) from Arabidopsis thaliana (Mouse-ear cress).